We begin with the raw amino-acid sequence, 329 residues long: Probable allantoicase (329 aa).

The protein belongs to the allantoicase family.

The catalysed reaction is allantoate + H2O = (S)-ureidoglycolate + urea. It functions in the pathway nitrogen metabolism; (S)-allantoin degradation; (S)-ureidoglycolate from allantoate (aminidohydrolase route): step 1/1. This is Probable allantoicase from Nocardia farcinica (strain IFM 10152).